Reading from the N-terminus, the 139-residue chain is Actin-depolymerizing factor 4 (139 aa).

The ADF-H domain occupies 5 to 139; the sequence is SSGVAIHDDC…SLDALKDRVK (135 aa).

This sequence belongs to the actin-binding proteins ADF family. As to quaternary structure, interacts with LECRK1 (via kinase domain).

It is found in the cytoplasm. The protein localises to the cytoskeleton. In terms of biological role, actin-depolymerizing protein. Severs actin filaments (F-actin) and binds to actin monomers. Involved in innate immunity. Required for the expression of defense-related genes PR1A, LOX2 and CHS1 upon biotic stresses. Required for basal resistance to the fungal blast (Magnaporthe grisea), bacterial blight (Xanthomonas oryzae pv. oryzae, Xoo) and the herbivorous insect brown planthopper (Nilaparvata lugens, BPH). Involved in the promotion of seed germination. Required for the expression of alpha-amylase genes during seed germination. The protein is Actin-depolymerizing factor 4 (ADF4) of Oryza sativa subsp. japonica (Rice).